The primary structure comprises 298 residues: ADP/ATP translocase 1 (298 aa).

Residues 1-7 (MGDQALS) lie on the Mitochondrial intermembrane side of the membrane. G2 is subject to N-acetylglycine. The stretch at 6 to 98 (LSFLKDFLAG…FAFKDKYKQI (93 aa)) is one Solcar 1 repeat. Position 7 is a phosphoserine (S7). The chain crosses the membrane as a helical span at residues 8-37 (FLKDFLAGGIAAAVSKTAVAPIERVKLLLQ). The Mitochondrial matrix portion of the chain corresponds to 38–74 (VQHASKQISAEKQYKGIIDCVVRIPKEQGFLSFWRGN). K52 carries the N6,N6,N6-trimethyllysine modification. A helical membrane pass occupies residues 75-99 (LANVIRYFPTQALNFAFKDKYKQIF). ADP contacts are provided by R80 and K92. Residues 100-109 (LGGVDRHKQF) are Mitochondrial intermembrane-facing. Residues 110–130 (WRYFAGNLASGGAAGATSLCF) traverse the membrane as a helical segment. 2 Solcar repeats span residues 111–201 (RYFA…AKGM) and 212–297 (VSWM…IKKY). Residues 131–178 (VYPLDFARTRLAADVGKGSSQREFNGLGDCLTKIFKSDGLKGLYQGFS) are Mitochondrial matrix-facing. K147 carries the N6-succinyllysine modification. Residues S149 and S150 each carry the phosphoserine modification. The residue at position 160 (C160) is an S-nitrosocysteine. The helical transmembrane segment at 179–199 (VSVQGIIIYRAAYFGVYDTAK) threads the bilayer. At 200-210 (GMLPDPKNVHI) the chain is on the mitochondrial intermembrane side. A helical transmembrane segment spans residues 211–231 (IVSWMIAQSVTAVAGLVSYPF). Residues 232 to 273 (DTVRRRMMMQSGRKGADIMYTGTVDCWRKIAKDEGRKAFFKG) are Mitochondrial matrix-facing. ADP is bound at residue R235. Residues 235-240 (RRRMMM) are important for transport activity. The short motif at 235 to 240 (RRRMMM) is the Nucleotide carrier signature motif element. N6-succinyllysine is present on residues K245 and K272. A helical membrane pass occupies residues 274 to 291 (AWSNVLRGMGGAFVLVLY). Residues 292-298 (DEIKKYV) are Mitochondrial intermembrane-facing.

Belongs to the mitochondrial carrier (TC 2.A.29) family. Monomer. Found in a complex with ARL2, ARL2BP and SLC25A4/ANT1. Interacts with ARL2BP. Interacts with TIMM44; leading to inhibit the presequence translocase TIMM23, thereby promoting stabilization of PINK1. In terms of processing, under cell death induction, transglutaminated by TGM2. Transglutamination leads to formation of covalent cross-links between a glutamine and the epsilon-amino group of a lysine residue, forming polymers.

It is found in the mitochondrion inner membrane. The protein localises to the membrane. It carries out the reaction ADP(in) + ATP(out) = ADP(out) + ATP(in). The enzyme catalyses H(+)(in) = H(+)(out). Its activity is regulated as follows. The matrix-open state (m-state) is inhibited by the membrane-permeable bongkrekic acid (BKA). The cytoplasmic-open state (c-state) is inhibited by the membrane-impermeable toxic inhibitor carboxyatractyloside (CATR). Proton transporter activity is inhibited by ADP:ATP antiporter activity. In terms of biological role, ADP:ATP antiporter that mediates import of ADP into the mitochondrial matrix for ATP synthesis, and export of ATP out to fuel the cell. Cycles between the cytoplasmic-open state (c-state) and the matrix-open state (m-state): operates by the alternating access mechanism with a single substrate-binding site intermittently exposed to either the cytosolic (c-state) or matrix (m-state) side of the inner mitochondrial membrane. In addition to its ADP:ATP antiporter activity, also involved in mitochondrial uncoupling and mitochondrial permeability transition pore (mPTP) activity. Plays a role in mitochondrial uncoupling by acting as a proton transporter: proton transport uncouples the proton flows via the electron transport chain and ATP synthase to reduce the efficiency of ATP production and cause mitochondrial thermogenesis. Proton transporter activity is inhibited by ADP:ATP antiporter activity, suggesting that SLC25A4/ANT1 acts as a master regulator of mitochondrial energy output by maintaining a delicate balance between ATP production (ADP:ATP antiporter activity) and thermogenesis (proton transporter activity). Proton transporter activity requires free fatty acids as cofactor, but does not transport it. Also plays a key role in mPTP opening, a non-specific pore that enables free passage of the mitochondrial membranes to solutes of up to 1.5 kDa, and which contributes to cell death. It is however unclear if SLC25A4/ANT1 constitutes a pore-forming component of mPTP or regulates it. Acts as a regulator of mitophagy independently of ADP:ATP antiporter activity: promotes mitophagy via interaction with TIMM44, leading to inhibit the presequence translocase TIMM23, thereby promoting stabilization of PINK1. This chain is ADP/ATP translocase 1, found in Rattus norvegicus (Rat).